Here is a 258-residue protein sequence, read N- to C-terminus: Steroid 5-alpha-reductase DET2 (258 aa).

The next 6 membrane-spanning stretches (helical) occupy residues 8–28, 49–69, 77–97, 109–129, 144–164, and 201–221; these read FHYC…SLYF, LAWF…FPSG, SFLL…LYPL, FPVS…YLQA, LFWW…WVNV, and IMEW…GFFL.

Belongs to the steroid 5-alpha reductase family. In terms of tissue distribution, accumulates in fibers (seed trichomes) during both their initiation and elongation phases. Also present in roots, hypocotyls, leaves, flowers and ovules, and barely in cotyledons.

It localises to the membrane. It catalyses the reaction a 3-oxo-5alpha-steroid + NADP(+) = a 3-oxo-Delta(4)-steroid + NADPH + H(+). It participates in plant hormone biosynthesis; brassinosteroid biosynthesis. In terms of biological role, involved in a reduction step in the biosynthesis of the plant steroid, brassinolide (BL). Promotes cotton fibers (seed trichomes) initiation and elongation. This chain is Steroid 5-alpha-reductase DET2, found in Gossypium hirsutum (Upland cotton).